The following is a 151-amino-acid chain: MAFGMLIYILLKAMGALSEEAALTASSLSTELWNSWTKNNTEAYYAEQPRLLKLMQTCLEEHHSYCINGLCAFHSELRKPICKCLAGYNGERCEHLTLNSYAHNSYERYIAVGIGIGILTSGILAIIYCYVRKRCRKLKSPYKVCMGETAL.

The first 18 residues, 1–18 (MAFGMLIYILLKAMGALS), serve as a signal peptide directing secretion. The Extracellular portion of the chain corresponds to 19-108 (EEAALTASSL…NSYAHNSYER (90 aa)). N-linked (GlcNAc...) asparagine glycosylation occurs at N39. Residues 54–94 (LMQTCLEEHHSYCINGLCAFHSELRKPICKCLAGYNGERCE) enclose the EGF-like domain. Intrachain disulfides connect C58–C71, C66–C82, and C84–C93. The chain crosses the membrane as a helical span at residues 109-129 (YIAVGIGIGILTSGILAIIYC). The Cytoplasmic segment spans residues 130 to 151 (YVRKRCRKLKSPYKVCMGETAL).

It is found in the membrane. Functionally, promotes the growth of epithelial cells. This is Epigen (EPGN) from Gallus gallus (Chicken).